The sequence spans 164 residues: MQKQHQRQHKVELVANLKSQFADAKALLICDYKGLSVRKLEALRNKARNQGIKVQVIKNTLAHIAMKETGYSDLDLKETNVFLWGGDQIALSKLVFDFQKEHKDHFVLKAGLFDKESVSVAHVEAVSKLPSKEELMGMLLSVWTAPARYFVTGLDNLRKAKEEN.

This sequence belongs to the universal ribosomal protein uL10 family. In terms of assembly, part of the ribosomal stalk of the 50S ribosomal subunit. The N-terminus interacts with L11 and the large rRNA to form the base of the stalk. The C-terminus forms an elongated spine to which L12 dimers bind in a sequential fashion forming a multimeric L10(L12)X complex.

Forms part of the ribosomal stalk, playing a central role in the interaction of the ribosome with GTP-bound translation factors. The chain is Large ribosomal subunit protein uL10 (rplJ) from Helicobacter pylori (strain ATCC 700392 / 26695) (Campylobacter pylori).